The primary structure comprises 867 residues: MIKKLKEIPFFKSTEMKIAEKTLQQINDLEPSVVNLTDEELQNKTDEFVRRIQEGETLEHIRPEVFAVSREATKRVLKKRPYDVQMLGGIILDLGSVAEMRTGEGKTITSIAPVYLNALEKKGVIVSTVNEYLAERDAAEMGEVFSFLKMTVGVNKPSMSPEEKKQIYQCDITYSIHSELGFDYLRDNMVTNINDKVQRGLNYILLDEVDSILIDEARTPLIISGGESSSSYMYEVANQFARTLQPGDYEIDEESKTIKLVDSGIDKANKFFTLSNLYDIKNSELVHRIQNALRANFIMKKDVEYIVKDEKIELIDAFTGRIMEGRAYSEGLQQAIQAKEFLEIESETKTLATITYQNFFRMFKKLSGMTGTAKTEEQEFIDIYNMRVNPIPTNLPNIRVDDEDSIYWGTRQKLNAILKEVKQVSKTGQPILIGTSQIEQSEQLHQLFDQNGIVHTVLNAKQNEQEANIISQAGQLNAITIATNMAGRGTDIKPSKEALAVGGLYVLGTDKSESRRIDNQLRGRSGRQGDIGYSKFFLSLDDQLILRFAGADKLKEIFPKSEEALNSKQLKRHFSNAQKKIEGFNYDSRKTVLNYDDVIRQQRELMYSQRDLILVSEDLLFVIERMVFRSVDDVLKNSMFLLKNGGFDYTKLTEYINDQWLKPFDFKFEESKLSHLHEKDLAEYIFQNLMEQYMIVRQRLIDSFGEDSILYHERSILISTIDSYWQNHINSMDKLRSNSNMVQYAQKNPYQVYTQKGSKKFERLIVEIALQSSVKLFNNPSAYRQDQMEEVMIEGYTQEFIDKIPESEREYFKTLPQDLKSKIVKNLIQLEQSIAMVESNDQSQDLQSITIDILPDQNLNNSSDEAK.

Residues Gln-85, 103 to 107 (GEGKT), and Asp-491 each bind ATP.

The protein belongs to the SecA family. In terms of assembly, monomer and homodimer. Part of the essential Sec protein translocation apparatus which comprises SecA, SecYEG and auxiliary proteins SecDF. Other proteins may also be involved.

The protein resides in the cell membrane. It is found in the cytoplasm. The catalysed reaction is ATP + H2O + cellular proteinSide 1 = ADP + phosphate + cellular proteinSide 2.. Its function is as follows. Part of the Sec protein translocase complex. Interacts with the SecYEG preprotein conducting channel. Has a central role in coupling the hydrolysis of ATP to the transfer of proteins into and across the cell membrane, serving as an ATP-driven molecular motor driving the stepwise translocation of polypeptide chains across the membrane. This chain is Protein translocase subunit SecA, found in Mycoplasmopsis pulmonis (strain UAB CTIP) (Mycoplasma pulmonis).